A 294-amino-acid polypeptide reads, in one-letter code: 33 kDa chaperonin (294 aa).

Intrachain disulfides connect C237-C239 and C270-C273.

This sequence belongs to the HSP33 family. Post-translationally, under oxidizing conditions two disulfide bonds are formed involving the reactive cysteines. Under reducing conditions zinc is bound to the reactive cysteines and the protein is inactive.

It localises to the cytoplasm. In terms of biological role, redox regulated molecular chaperone. Protects both thermally unfolding and oxidatively damaged proteins from irreversible aggregation. Plays an important role in the bacterial defense system toward oxidative stress. The chain is 33 kDa chaperonin from Geobacillus kaustophilus (strain HTA426).